A 392-amino-acid chain; its full sequence is Phosphoglycerate kinase (392 aa).

Substrate-binding positions include 21–23, Arg-36, 59–62, Arg-114, and Arg-147; these read DLN and HLGR. ATP contacts are provided by residues Lys-198, Glu-320, and 346–349; that span reads GGDT.

It belongs to the phosphoglycerate kinase family. Monomer.

It is found in the cytoplasm. The catalysed reaction is (2R)-3-phosphoglycerate + ATP = (2R)-3-phospho-glyceroyl phosphate + ADP. It functions in the pathway carbohydrate degradation; glycolysis; pyruvate from D-glyceraldehyde 3-phosphate: step 2/5. This chain is Phosphoglycerate kinase, found in Nitrosomonas eutropha (strain DSM 101675 / C91 / Nm57).